Here is a 51-residue protein sequence, read N- to C-terminus: Large ribosomal subunit protein eL39 (51 aa).

The interval 1-23 (MSALKKSFIKRKLAKKQKQNRPM) is disordered. A compositionally biased stretch (basic residues) spans 7–19 (SFIKRKLAKKQKQ).

This sequence belongs to the eukaryotic ribosomal protein eL39 family. Interacts with impact.

This chain is Large ribosomal subunit protein eL39 (rpl-39), found in Caenorhabditis elegans.